The primary structure comprises 380 residues: Chorismate synthase (380 aa).

Residue Arg49 coordinates NADP(+). Residues Gly288, 303–307 (KPPSS), and Arg330 each bind FMN.

This sequence belongs to the chorismate synthase family. Requires FMNH2 as cofactor.

It catalyses the reaction 5-O-(1-carboxyvinyl)-3-phosphoshikimate = chorismate + phosphate. Its pathway is metabolic intermediate biosynthesis; chorismate biosynthesis; chorismate from D-erythrose 4-phosphate and phosphoenolpyruvate: step 7/7. Its function is as follows. Catalyzes the anti-1,4-elimination of the C-3 phosphate and the C-6 proR hydrogen from 5-enolpyruvylshikimate-3-phosphate (EPSP) to yield chorismate, which is the branch point compound that serves as the starting substrate for the three terminal pathways of aromatic amino acid biosynthesis. This reaction introduces a second double bond into the aromatic ring system. The polypeptide is Chorismate synthase (Aeropyrum pernix (strain ATCC 700893 / DSM 11879 / JCM 9820 / NBRC 100138 / K1)).